We begin with the raw amino-acid sequence, 146 residues long: uncharacterized protein (146 aa).

Positions 1–120 (MTDKFDANDE…TILKWEKNMD (120 aa)) constitute an N-acetyltransferase domain.

It belongs to the acetyltransferase family.

This is an uncharacterized protein from Streptococcus pyogenes serotype M6 (strain ATCC BAA-946 / MGAS10394).